We begin with the raw amino-acid sequence, 434 residues long: GTPase Obg (434 aa).

The region spanning 1–158 (MFLDTAKIKV…RELQLELKIL (158 aa)) is the Obg domain. Positions 159-336 (ADVGLVGFPS…LLDATAELLD (178 aa)) constitute an OBG-type G domain. GTP-binding positions include 165 to 172 (GFPSVGKS), 190 to 194 (FTTIV), 212 to 215 (DLPG), 282 to 285 (NKMD), and 317 to 319 (SGL). Mg(2+)-binding residues include Ser-172 and Thr-192. Positions 356–434 (GFDEEEKAFE…IGKFEFEFVD (79 aa)) constitute an OCT domain.

This sequence belongs to the TRAFAC class OBG-HflX-like GTPase superfamily. OBG GTPase family. As to quaternary structure, monomer. It depends on Mg(2+) as a cofactor.

It is found in the cytoplasm. Its function is as follows. An essential GTPase which binds GTP, GDP and possibly (p)ppGpp with moderate affinity, with high nucleotide exchange rates and a fairly low GTP hydrolysis rate. Plays a role in control of the cell cycle, stress response, ribosome biogenesis and in those bacteria that undergo differentiation, in morphogenesis control. The sequence is that of GTPase Obg from Streptococcus pneumoniae (strain Hungary19A-6).